We begin with the raw amino-acid sequence, 131 residues long: MMTDPIADMLTRIRNAVNAKHKVVEVPASNIKKSIAQILLDEGFIDGFNVTEDGKQGIITIDLKYGPNEEKVISGIKRISKPGLRVYARANEVPKVLGGLGIAIVSTSKGLVTDKVARKEGIGGEVICYVW.

It belongs to the universal ribosomal protein uS8 family. In terms of assembly, part of the 30S ribosomal subunit. Contacts proteins S5 and S12.

Its function is as follows. One of the primary rRNA binding proteins, it binds directly to 16S rRNA central domain where it helps coordinate assembly of the platform of the 30S subunit. This is Small ribosomal subunit protein uS8 from Finegoldia magna (strain ATCC 29328 / DSM 20472 / WAL 2508) (Peptostreptococcus magnus).